Here is a 204-residue protein sequence, read N- to C-terminus: Large ribosomal subunit protein eL15 (204 aa).

Belongs to the eukaryotic ribosomal protein eL15 family. As to quaternary structure, component of the large ribosomal subunit.

It is found in the cytoplasm. Its function is as follows. Component of the large ribosomal subunit. The ribosome is a large ribonucleoprotein complex responsible for the synthesis of proteins in the cell. The sequence is that of Large ribosomal subunit protein eL15 (rpl15) from Silurus meridionalis (Southern catfish).